Reading from the N-terminus, the 357-residue chain is 3-isopropylmalate dehydrogenase (357 aa).

Residues Arg97, Arg107, Arg135, and Asp224 each coordinate substrate. Mg(2+)-binding residues include Asp224, Asp248, and Asp252. 282–294 (GSAPDIAGQDKAN) lines the NAD(+) pocket.

This sequence belongs to the isocitrate and isopropylmalate dehydrogenases family. LeuB type 1 subfamily. In terms of assembly, homodimer. The cofactor is Mg(2+). Mn(2+) serves as cofactor.

It localises to the cytoplasm. It carries out the reaction (2R,3S)-3-isopropylmalate + NAD(+) = 4-methyl-2-oxopentanoate + CO2 + NADH. The protein operates within amino-acid biosynthesis; L-leucine biosynthesis; L-leucine from 3-methyl-2-oxobutanoate: step 3/4. Its function is as follows. Catalyzes the oxidation of 3-carboxy-2-hydroxy-4-methylpentanoate (3-isopropylmalate) to 3-carboxy-4-methyl-2-oxopentanoate. The product decarboxylates to 4-methyl-2 oxopentanoate. This Synechococcus sp. (strain CC9605) protein is 3-isopropylmalate dehydrogenase.